Here is a 341-residue protein sequence, read N- to C-terminus: Anthranilate phosphoribosyltransferase (341 aa).

5-phospho-alpha-D-ribose 1-diphosphate-binding positions include G79, 82–83, T87, 89–92, 107–115, and S119; these read GD, NIST, and KHGNRAATS. G79 provides a ligand contact to anthranilate. S91 is a binding site for Mg(2+). N110 serves as a coordination point for anthranilate. R165 lines the anthranilate pocket. Residues D224 and E225 each coordinate Mg(2+).

Belongs to the anthranilate phosphoribosyltransferase family. In terms of assembly, homodimer. Requires Mg(2+) as cofactor.

The catalysed reaction is N-(5-phospho-beta-D-ribosyl)anthranilate + diphosphate = 5-phospho-alpha-D-ribose 1-diphosphate + anthranilate. The protein operates within amino-acid biosynthesis; L-tryptophan biosynthesis; L-tryptophan from chorismate: step 2/5. Its function is as follows. Catalyzes the transfer of the phosphoribosyl group of 5-phosphorylribose-1-pyrophosphate (PRPP) to anthranilate to yield N-(5'-phosphoribosyl)-anthranilate (PRA). The polypeptide is Anthranilate phosphoribosyltransferase (Symbiobacterium thermophilum (strain DSM 24528 / JCM 14929 / IAM 14863 / T)).